The chain runs to 557 residues: Formate--tetrahydrofolate ligase 2 (557 aa).

ATP is bound at residue 66 to 73 (TPAGEGKT).

This sequence belongs to the formate--tetrahydrofolate ligase family.

The catalysed reaction is (6S)-5,6,7,8-tetrahydrofolate + formate + ATP = (6R)-10-formyltetrahydrofolate + ADP + phosphate. It functions in the pathway one-carbon metabolism; tetrahydrofolate interconversion. This is Formate--tetrahydrofolate ligase 2 from Streptococcus pyogenes serotype M1.